A 130-amino-acid chain; its full sequence is Small ribosomal subunit protein uS8 (130 aa).

The protein belongs to the universal ribosomal protein uS8 family. Part of the 30S ribosomal subunit. Contacts proteins S5 and S12.

In terms of biological role, one of the primary rRNA binding proteins, it binds directly to 16S rRNA central domain where it helps coordinate assembly of the platform of the 30S subunit. The polypeptide is Small ribosomal subunit protein uS8 (Marinobacter nauticus (strain ATCC 700491 / DSM 11845 / VT8) (Marinobacter aquaeolei)).